The following is a 346-amino-acid chain: Annexin A1 (346 aa).

Alanine 2 is subject to N-acetylalanine. Serine 5 carries the phosphoserine; by TRPM7 modification. Glutamine 19 participates in a covalent cross-link: Isoglutamyl lysine isopeptide (Gln-Lys) (interchain with K-?). Tyrosine 21 carries the post-translational modification Phosphotyrosine; by EGFR. Serine 27 is modified (phosphoserine; by PKC). Residues serine 34 and serine 37 each carry the phosphoserine modification. Annexin repeat units follow at residues 42–113, 114–185, 197–269, and 273–344; these read FNPS…AMLK, TPAQ…ALAK, DLAD…TIVK, and STPA…ALCG. Lysine 58 bears the N6-acetyllysine mark. Ca(2+)-binding residues include glycine 59, valine 60, glutamate 62, lysine 97, leucine 100, glutamate 105, methionine 127, glycine 129, glycine 131, threonine 132, and glutamate 134. Residue threonine 136 is modified to Phosphothreonine. Ca(2+) is bound by residues aspartate 171, glycine 210, and arginine 213. Lysine 214 is covalently cross-linked (Glycyl lysine isopeptide (Lys-Gly) (interchain with G-Cter in SUMO1); alternate). A Glycyl lysine isopeptide (Lys-Gly) (interchain with G-Cter in SUMO2); alternate cross-link involves residue lysine 214. Glycine 215, aspartate 253, glutamate 255, and leucine 256 together coordinate Ca(2+). A Glycyl lysine isopeptide (Lys-Gly) (interchain with G-Cter in SUMO1) cross-link involves residue lysine 257. The Ca(2+) site is built by glutamate 261, methionine 286, glycine 288, and glycine 290. An N6-acetyllysine modification is found at lysine 312. Cysteine 324 and cysteine 343 form a disulfide bridge. Positions 328, 330, and 331 each coordinate Ca(2+). Lysine 332 is covalently cross-linked (Glycyl lysine isopeptide (Lys-Gly) (interchain with G-Cter in SUMO1)). Residue glutamate 336 coordinates Ca(2+).

The protein belongs to the annexin family. As to quaternary structure, homodimer; non-covalently linked. Homodimer; linked by transglutamylation. Homodimers linked by transglutamylation are observed in placenta, but not in other tissues. Interacts with S100A11. Heterotetramer, formed by two molecules each of S100A11 and ANXA1. Interacts with DYSF. Interacts with EGFR. Phosphorylated by protein kinase C, EGFR and TRPM7. Phosphorylated in response to EGF treatment. In terms of processing, sumoylated. Post-translationally, proteolytically cleaved by cathepsin CTSG to release the active N-terminal peptide Ac2-26. As to expression, detected in eosinophils. Detected in lung, placenta, spleen and thymus (at protein level).

Its subcellular location is the nucleus. It localises to the cytoplasm. The protein resides in the cell projection. The protein localises to the cilium. It is found in the basolateral cell membrane. Its subcellular location is the lateral cell membrane. It localises to the cell membrane. The protein resides in the apical cell membrane. The protein localises to the membrane. It is found in the endosome membrane. Its subcellular location is the secreted. It localises to the extracellular space. The protein resides in the early endosome. The protein localises to the cytoplasmic vesicle membrane. It is found in the extracellular exosome. Its subcellular location is the cytoplasmic vesicle. It localises to the secretory vesicle lumen. The protein resides in the phagocytic cup. Plays important roles in the innate immune response as effector of glucocorticoid-mediated responses and regulator of the inflammatory process. Has anti-inflammatory activity. Plays a role in glucocorticoid-mediated down-regulation of the early phase of the inflammatory response. Contributes to the adaptive immune response by enhancing signaling cascades that are triggered by T-cell activation, regulates differentiation and proliferation of activated T-cells. Promotes the differentiation of T-cells into Th1 cells and negatively regulates differentiation into Th2 cells. Has no effect on unstimulated T-cells. Negatively regulates hormone exocytosis via activation of the formyl peptide receptors and reorganization of the actin cytoskeleton. Has high affinity for Ca(2+) and can bind up to eight Ca(2+) ions. Displays Ca(2+)-dependent binding to phospholipid membranes. Plays a role in the formation of phagocytic cups and phagosomes. Plays a role in phagocytosis by mediating the Ca(2+)-dependent interaction between phagosomes and the actin cytoskeleton. Functionally, functions at least in part by activating the formyl peptide receptors and downstream signaling cascades. Promotes chemotaxis of granulocytes and monocytes via activation of the formyl peptide receptors. Promotes rearrangement of the actin cytoskeleton, cell polarization and cell migration. Promotes resolution of inflammation and wound healing. Acts via neutrophil N-formyl peptide receptors to enhance the release of CXCL2. This Rattus norvegicus (Rat) protein is Annexin A1 (Anxa1).